Here is a 69-residue protein sequence, read N- to C-terminus: Large ribosomal subunit protein bL28 (69 aa).

It belongs to the bacterial ribosomal protein bL28 family.

The sequence is that of Large ribosomal subunit protein bL28 from Nitratidesulfovibrio vulgaris (strain ATCC 29579 / DSM 644 / CCUG 34227 / NCIMB 8303 / VKM B-1760 / Hildenborough) (Desulfovibrio vulgaris).